Consider the following 430-residue polypeptide: Histidinol dehydrogenase (430 aa).

Residues Tyr-129, Gln-190, and Asn-213 each coordinate NAD(+). Substrate contacts are provided by Ser-236, Gln-258, and His-261. 2 residues coordinate Zn(2+): Gln-258 and His-261. Catalysis depends on proton acceptor residues Glu-326 and His-327. Substrate-binding residues include His-327, Asp-360, Glu-414, and His-419. Asp-360 is a Zn(2+) binding site. His-419 contributes to the Zn(2+) binding site.

The protein belongs to the histidinol dehydrogenase family. Requires Zn(2+) as cofactor.

The catalysed reaction is L-histidinol + 2 NAD(+) + H2O = L-histidine + 2 NADH + 3 H(+). The protein operates within amino-acid biosynthesis; L-histidine biosynthesis; L-histidine from 5-phospho-alpha-D-ribose 1-diphosphate: step 9/9. In terms of biological role, catalyzes the sequential NAD-dependent oxidations of L-histidinol to L-histidinaldehyde and then to L-histidine. This Gluconobacter oxydans (strain 621H) (Gluconobacter suboxydans) protein is Histidinol dehydrogenase.